A 332-amino-acid polypeptide reads, in one-letter code: Palmitoyltransferase ZDHHC15B (332 aa).

Residues 1 to 14 (MALSRALRCCQRIF) lie on the Cytoplasmic side of the membrane. A helical transmembrane segment spans residues 15–35 (SWIPVIIISSVVLWSYYAYVF). The Lumenal segment spans residues 36–50 (ELCFVTLSNNLERVT). Residues 51-71 (YLLIFHVCFIMFCWTYWKAIF) form a helical membrane-spanning segment. Topologically, residues 72–166 (TPPSTPTKKF…NNCVGFSNYK (95 aa)) are cytoplasmic. The DHHC domain maps to 123–173 (RFCDRCQVIKPDRCHHCSVCETCVLKMDHHCPWVNNCVGFSNYKFFLLFLS). Residues C125 and C128 each contribute to the Zn(2+) site. Substrate is bound at residue K132. Positions 138, 139, 142, 145, and 152 each coordinate Zn(2+). The active-site S-palmitoyl cysteine intermediate is the C153. Residue C159 coordinates Zn(2+). The chain crosses the membrane as a helical span at residues 167–187 (FFLLFLSYSMIYCVFIASTVF). Residues 188–204 (QYFLKFWVGDLPNGPAK) lie on the Lumenal side of the membrane. A helical transmembrane segment spans residues 205 to 228 (FHVLFLLFVALMFFVSLMFLFGYH). Topologically, residues 229–332 (CWLVAKNRST…GSSLLIRTES (104 aa)) are cytoplasmic. Residues 305-332 (EEKWVEDGGSDEESADENGSSLLIRTES) are disordered.

The protein belongs to the DHHC palmitoyltransferase family. In terms of processing, autopalmitoylated (in vitro).

Its subcellular location is the golgi apparatus membrane. It is found in the postsynaptic density. It catalyses the reaction L-cysteinyl-[protein] + hexadecanoyl-CoA = S-hexadecanoyl-L-cysteinyl-[protein] + CoA. It carries out the reaction L-cysteinyl-[protein] + tetradecanoyl-CoA = S-tetradecanoyl-L-cysteinyl-[protein] + CoA. The enzyme catalyses L-cysteinyl-[protein] + octadecanoyl-CoA = S-octadecanoyl-L-cysteinyl-[protein] + CoA. In terms of biological role, palmitoyltransferase that catalyzes the addition of palmitate onto various protein substrates. Has no stringent fatty acid selectivity and in addition to palmitate can also transfer onto target proteins myristate from tetradecanoyl-CoA and stearate from octadecanoyl-CoA. May thereby regulate target proteins association and localization to membranes. In the nervous system, probably catalyzes the palmitoylation of synaptic proteins and is involved in the differentiation of dopaminergic neurons and the development of the diencephalon. This chain is Palmitoyltransferase ZDHHC15B (zdhhc15b), found in Danio rerio (Zebrafish).